A 126-amino-acid chain; its full sequence is Profilin-1A (126 aa).

An actin binding region spans residues 2 to 36 (SWQTYVDTNLVGTGAVTQAAILGLDGNTWATSAGF). Lysine 104 carries the N6,N6,N6-trimethyllysine modification.

The protein belongs to the profilin family. Occurs in many kinds of cells as a complex with monomeric actin in a 1:1 ratio.

It is found in the cytoplasm. The protein localises to the cytoskeleton. Functionally, binds to actin and affects the structure of the cytoskeleton. At high concentrations, profilin prevents the polymerization of actin, whereas it enhances it at low concentrations. By binding to PIP2, it inhibits the formation of IP3 and DG. In Acanthamoeba castellanii (Amoeba), this protein is Profilin-1A.